We begin with the raw amino-acid sequence, 332 residues long: Holliday junction branch migration complex subunit RuvB (332 aa).

Positions 1-181 are large ATPase domain (RuvB-L); it reads MSRILDNEMM…FGITGHMEYY (181 aa). ATP contacts are provided by residues Leu-20, Arg-21, Gly-62, Lys-65, Thr-66, Thr-67, 128 to 130, Arg-171, Tyr-181, and Arg-218; that span reads EDF. Thr-66 contributes to the Mg(2+) binding site. A small ATPAse domain (RuvB-S) region spans residues 182–252; it reads AHADLTEIVE…ITDKALTMLD (71 aa). A head domain (RuvB-H) region spans residues 255–332; that stretch reads HEGLDYVDQK…EHLGYEYSEK (78 aa). Positions 291, 310, 312, and 315 each coordinate DNA.

The protein belongs to the RuvB family. Homohexamer. Forms an RuvA(8)-RuvB(12)-Holliday junction (HJ) complex. HJ DNA is sandwiched between 2 RuvA tetramers; dsDNA enters through RuvA and exits via RuvB. An RuvB hexamer assembles on each DNA strand where it exits the tetramer. Each RuvB hexamer is contacted by two RuvA subunits (via domain III) on 2 adjacent RuvB subunits; this complex drives branch migration. In the full resolvosome a probable DNA-RuvA(4)-RuvB(12)-RuvC(2) complex forms which resolves the HJ.

The protein localises to the cytoplasm. The catalysed reaction is ATP + H2O = ADP + phosphate + H(+). Functionally, the RuvA-RuvB-RuvC complex processes Holliday junction (HJ) DNA during genetic recombination and DNA repair, while the RuvA-RuvB complex plays an important role in the rescue of blocked DNA replication forks via replication fork reversal (RFR). RuvA specifically binds to HJ cruciform DNA, conferring on it an open structure. The RuvB hexamer acts as an ATP-dependent pump, pulling dsDNA into and through the RuvAB complex. RuvB forms 2 homohexamers on either side of HJ DNA bound by 1 or 2 RuvA tetramers; 4 subunits per hexamer contact DNA at a time. Coordinated motions by a converter formed by DNA-disengaged RuvB subunits stimulates ATP hydrolysis and nucleotide exchange. Immobilization of the converter enables RuvB to convert the ATP-contained energy into a lever motion, pulling 2 nucleotides of DNA out of the RuvA tetramer per ATP hydrolyzed, thus driving DNA branch migration. The RuvB motors rotate together with the DNA substrate, which together with the progressing nucleotide cycle form the mechanistic basis for DNA recombination by continuous HJ branch migration. Branch migration allows RuvC to scan DNA until it finds its consensus sequence, where it cleaves and resolves cruciform DNA. This is Holliday junction branch migration complex subunit RuvB from Streptococcus pneumoniae serotype 19F (strain G54).